Consider the following 358-residue polypeptide: Membrane-bound lytic murein transglycosylase C (358 aa).

A signal peptide spans 1-19; that stretch reads MKITLKKLLILAIVPFLYA. Cysteine 20 carries N-palmitoyl cysteine lipidation. Cysteine 20 is lipidated: S-diacylglycerol cysteine.

The protein belongs to the transglycosylase Slt family.

It is found in the cell outer membrane. The catalysed reaction is Exolytic cleavage of the (1-&gt;4)-beta-glycosidic linkage between N-acetylmuramic acid (MurNAc) and N-acetylglucosamine (GlcNAc) residues in peptidoglycan, from either the reducing or the non-reducing ends of the peptidoglycan chains, with concomitant formation of a 1,6-anhydrobond in the MurNAc residue.. In terms of biological role, murein-degrading enzyme. May play a role in recycling of muropeptides during cell elongation and/or cell division. This Actinobacillus succinogenes (strain ATCC 55618 / DSM 22257 / CCUG 43843 / 130Z) protein is Membrane-bound lytic murein transglycosylase C.